Reading from the N-terminus, the 160-residue chain is Zinc finger A20 and AN1 domain-containing stress-associated protein 6 (160 aa).

An A20-type zinc finger spans residues 18–52 (PEAPILCVNNCGFFGSRMTENMCSKCYRDTVKAKT). Positions 24, 28, 40, and 43 each coordinate Zn(2+). The interval 73-94 (EVTDGGSGSVADGKQVMEEDTP) is disordered. The AN1-type zinc finger occupies 95 to 141 (KPPSNRCLSCRKKVGLTGFKCRCGGTFCSMHRYADSHKCTFDYKQVG). Zn(2+) is bound by residues Cys101, Cys104, Cys115, Cys117, Cys122, His125, His131, and Cys133.

May be involved in environmental stress response. In Oryza sativa subsp. japonica (Rice), this protein is Zinc finger A20 and AN1 domain-containing stress-associated protein 6 (SAP6).